A 29-amino-acid chain; its full sequence is Cytochrome b6-f complex subunit 8 (29 aa).

Residues 3 to 23 (IVDIAWAALMVVFTFSLSLVV) traverse the membrane as a helical segment.

Belongs to the PetN family. The 4 large subunits of the cytochrome b6-f complex are cytochrome b6, subunit IV (17 kDa polypeptide, PetD), cytochrome f and the Rieske protein, while the 4 small subunits are PetG, PetL, PetM and PetN. The complex functions as a dimer.

It is found in the plastid. The protein localises to the chloroplast thylakoid membrane. Its function is as follows. Component of the cytochrome b6-f complex, which mediates electron transfer between photosystem II (PSII) and photosystem I (PSI), cyclic electron flow around PSI, and state transitions. This Gnetum parvifolium (Small-leaved jointfir) protein is Cytochrome b6-f complex subunit 8.